Reading from the N-terminus, the 475-residue chain is Splicing factor U2AF 65 kDa subunit (475 aa).

Residues 1 to 90 form a disordered region; it reads MSDFDEFERQ…RHEKKKKVRK (90 aa). At Ser-2 the chain carries N-acetylserine. Ser-2 is modified (phosphoserine). Residues 2–93 form a required for interaction with PRPF19 region; that stretch reads SDFDEFERQL…KKKKVRKYWD (92 aa). Positions 7–22 are enriched in basic and acidic residues; sequence FERQLNENKQERDKEN. Residue Lys-15 is modified to 5-hydroxylysine; by JMJD6; alternate. Residue Lys-15 forms a Glycyl lysine isopeptide (Lys-Gly) (interchain with G-Cter in SUMO2); alternate linkage. Positions 17-47 are necessary and sufficient to stimulate pre-mRNAs 3'-end cleavage in a CFIm complex-dependent manner; sequence ERDKENRHRKRSHSRSRSRDRKRRSRSRDRR. Residues 23–46 show a composition bias toward basic residues; the sequence is RHRKRSHSRSRSRDRKRRSRSRDR. The span at 47-56 shows a compositional bias: basic and acidic residues; it reads RNRDQRSASR. A Glycyl lysine isopeptide (Lys-Gly) (interchain with G-Cter in SUMO2); alternate cross-link involves residue Lys-70. Lys-70 carries the post-translational modification N6-acetyllysine; alternate. Position 79 is a phosphoserine (Ser-79). Over residues 79 to 89 the composition is skewed to basic residues; that stretch reads SPRHEKKKKVR. 3 RRM domains span residues 149–231, 259–337, and 385–466; these read RRLY…RPHD, HKLF…RASV, and LPEE…YCDP. 5-hydroxylysine; by JMJD6 is present on Lys-276. At Ser-294 the chain carries Phosphoserine.

It belongs to the splicing factor SR family. Interacts with U2AF1L4. Heterodimer with U2AF1. Binds unphosphorylated SF1. Interacts with SCAF11 and SNW1. Interacts with ZRSR2/U2AF1-RS2. Interacts with RBM17. Interacts with PRPF19; the interaction is direct. Interacts with POLR2A (via the C-terminal domain); Interacts with PRPF19; the interaction is direct. Interacts with POLR2A (via the C-terminal domain); recruits PRPF19 and the Prp19 complex to the pre-mRNA. Interacts with KHDC4 (Isoform 2). Interacts with ZRSR2. Interacts with the SF3B complex composed of SF3B1, SF3B2, SF3B3, SF3B4, SF3B5, SF3B6 and PHF5A. Interacts (via N-terminus) with CPSF7 (via C-terminus); this interaction stimulates pre-mRNA 3'-end processing by promoting the recruitment of the CFIm complex to cleavage and polyadenylation signals. Interacts with ARGLU1; interaction may be involved in ARGLU1-mediated modulation of alternative splicing. Lysyl-hydroxylation at Lys-15 and Lys-276 affects the mRNA splicing activity of the protein, leading to regulate some, but not all, alternative splicing events.

It localises to the nucleus. Plays a role in pre-mRNA splicing and 3'-end processing. By recruiting PRPF19 and the PRP19C/Prp19 complex/NTC/Nineteen complex to the RNA polymerase II C-terminal domain (CTD), and thereby pre-mRNA, may couple transcription to splicing. Required for the export of mRNA out of the nucleus, even if the mRNA is encoded by an intron-less gene. Positively regulates pre-mRNA 3'-end processing by recruiting the CFIm complex to cleavage and polyadenylation signals. In Mus musculus (Mouse), this protein is Splicing factor U2AF 65 kDa subunit (U2af2).